The sequence spans 384 residues: MFEPSELSNNAIIKVIGVGGGGSNAVEHMVRERIEGVEFFAINTDAQALRKIEVGQTIQIGNNITKGLGAGANPEIGRTSAEEDKELLKSALDGSDMVFIAAGMGGGTGTGAAPVVAEIAKELGILTVAVVTKPFNFEGKKRMIVAEQGIIELSKYVDSLIIIPNDKLLKVLSRGISLLDAFSAANNVLKGAVQGIAELITRPGLMNVDFADVRTVMLEMGYAMMGTGISSGENRAEEASEIAISSPLLEDIDLSGARGVLVNITAGFDLKLDEFETVGNTIRSFSSDHATVVIGTSLDPDMNDTLRVTVVATGIGMEKNLDVNQIKNKSSREVLMDYRYQYLNISPKKTDKKIIKKEIKNTKEKINKEPEYLDIPSFLRKRAD.

Residues 20–24 (GGGSN), 107–109 (GTG), E138, R142, and N186 each bind GTP.

It belongs to the FtsZ family. As to quaternary structure, homodimer. Polymerizes to form a dynamic ring structure in a strictly GTP-dependent manner. Interacts directly with several other division proteins.

The protein localises to the cytoplasm. Essential cell division protein that forms a contractile ring structure (Z ring) at the future cell division site. The regulation of the ring assembly controls the timing and the location of cell division. One of the functions of the FtsZ ring is to recruit other cell division proteins to the septum to produce a new cell wall between the dividing cells. Binds GTP and shows GTPase activity. The sequence is that of Cell division protein FtsZ from Buchnera aphidicola subsp. Acyrthosiphon pisum (strain APS) (Acyrthosiphon pisum symbiotic bacterium).